We begin with the raw amino-acid sequence, 113 residues long: Hydrogenase maturation factor HypA (113 aa).

His2 provides a ligand contact to Ni(2+). 4 residues coordinate Zn(2+): Cys73, Cys76, Cys89, and Cys92.

Belongs to the HypA/HybF family.

Its function is as follows. Involved in the maturation of [NiFe] hydrogenases. Required for nickel insertion into the metal center of the hydrogenase. The sequence is that of Hydrogenase maturation factor HypA from Moorella thermoacetica (strain ATCC 39073 / JCM 9320).